The following is a 108-amino-acid chain: Large ribosomal subunit protein bL21c (108 aa).

This sequence belongs to the bacterial ribosomal protein bL21 family. In terms of assembly, part of the 50S ribosomal subunit.

The protein localises to the plastid. It is found in the chloroplast. Its function is as follows. This protein binds to 23S rRNA. The sequence is that of Large ribosomal subunit protein bL21c from Cyanidium caldarium (Red alga).